We begin with the raw amino-acid sequence, 233 residues long: MIELKHVTFGYNKKQMVLQDINITIPDGENVGILGESGCGKSTLASLVLGLFKPVKGEIYLSDNAVLPIFQHPLTSFNPDWTIETSLKEALYYYRGLTDNTAQDQLLLQHLSTFELNAQLLTKLPSEVSGGQLQRFNVMRSLLAQPRVLICDEITSNLDVIAEQNVINILKAQTITNLNHFIVISHDLSVLQRLVNRIIVLKDGMIVDDFAIEELFNVDRHPYTKELVQAFSY.

In terms of domain architecture, ABC transporter spans 2 to 228 (IELKHVTFGY…DRHPYTKELV (227 aa)). 35–42 (GESGCGKS) is an ATP binding site.

The protein belongs to the ABC transporter superfamily. As to quaternary structure, the complex is composed of two ATP-binding proteins (NikD and NikE), two transmembrane proteins (NikB and NikC) and a solute-binding protein (NikA).

The protein localises to the cell membrane. It catalyses the reaction Ni(2+)(out) + ATP + H2O = Ni(2+)(in) + ADP + phosphate + H(+). In terms of biological role, part of the ABC transporter complex NikABCDE (Opp2) involved in nickel import. Probably responsible for energy coupling to the transport system. This chain is Nickel import system ATP-binding protein NikE, found in Staphylococcus aureus (strain USA300).